Here is a 761-residue protein sequence, read N- to C-terminus: Prolyl endopeptidase FAP (761 aa).

Over 1-4 (MKTW) the chain is Cytoplasmic. Residues 5-25 (LKTVFGVTTLAALALVVICIV) traverse the membrane as a helical; Signal-anchor for type II membrane protein segment. Residues 26 to 761 (LRPSRVYKPE…FLKQCFSLSD (736 aa)) lie on the Extracellular side of the membrane. Residues Asn-49, Asn-92, and Asn-99 are each glycosylated (N-linked (GlcNAc...) asparagine). 2 residues coordinate substrate: Glu-203 and Glu-204. Asn-227 and Asn-314 each carry an N-linked (GlcNAc...) asparagine glycan. Cystine bridges form between Cys-321–Cys-332, Cys-438–Cys-441, and Cys-448–Cys-466. The active-site Charge relay system is the Ser-624. An intrachain disulfide couples Cys-643 to Cys-756. Residue Asn-679 is glycosylated (N-linked (GlcNAc...) asparagine). Catalysis depends on charge relay system residues Asp-702 and His-734.

This sequence belongs to the peptidase S9B family. Homodimer; homodimerization is required for activity of both plasma membrane and soluble forms. The monomer is inactive. Heterodimer with DPP4. Interacts with PLAUR; the interaction occurs at the cell surface of invadopodia membranes. Interacts with ITGB1. Interacts with ITGA3. Associates with integrin alpha-3/beta-1; the association occurs in a collagen-dependent manner at the cell surface of invadopodia membranes. N-glycosylated. Post-translationally, the N-terminus may be blocked. As to expression, expressed strongly in uterus, pancreas, submaxillary gland and skin, less in lymph node, ovary, skeletal muscle, adrenal and bone marrow. Expressed in reactive stromal fibroblast in epithelial cancers. Expressed in melanocytes but not melanomas (at protein level). Detected in fibroblasts, in placenta, uterus, embryos from day 7-19 and in newborn mice (P1).

The protein localises to the cell surface. The protein resides in the cell membrane. It is found in the cell projection. Its subcellular location is the lamellipodium membrane. It localises to the invadopodium membrane. The protein localises to the ruffle membrane. The protein resides in the membrane. It is found in the secreted. It catalyses the reaction Hydrolysis of Pro-|-Xaa &gt;&gt; Ala-|-Xaa in oligopeptides.. The catalysed reaction is Release of an N-terminal dipeptide, Xaa-Yaa-|-Zaa-, from a polypeptide, preferentially when Yaa is Pro, provided Zaa is neither Pro nor hydroxyproline.. Its activity is regulated as follows. Gelatinase activity is inhibited by serine-protease inhibitors, such as phenylmethylsulfonyl fluoride (PMSF), 4-(2-aminoethyl)-benzenesulfonyl fluoride hydrochloride (AEBSF), 4-amidino phenylsulfonyl fluoride (APSF) and diisopropyl fluorophosphate (DFP), N-ethylmaleimide (NEM) and phenylmethylsulfonyl fluoride (PMSF). Dipeptidyl peptidase activity is inhibited by 2,2'-azino-bis(3-ethylbenzthiazoline-6-sulfonic acid), diisopropylfluorophosphate (DFP). Prolyl endopeptidase activity is inhibited by the boronic acid peptide Ac-Gly-BoroPro, Ac-Gly-Pro-chloromethyl ketone and Thr-Ser-Gly-chloromethyl ketone. Cell surface glycoprotein serine protease that participates in extracellular matrix degradation and involved in many cellular processes including tissue remodeling, fibrosis, wound healing, inflammation and tumor growth. Both plasma membrane and soluble forms exhibit post-proline cleaving endopeptidase activity, with a marked preference for Ala/Ser-Gly-Pro-Ser/Asn/Ala consensus sequences, on substrate such as alpha-2-antiplasmin SERPINF2 and SPRY2. Degrade also gelatin, heat-denatured type I collagen, but not native collagen type I and IV, vibronectin, tenascin, laminin, fibronectin, fibrin or casein. Also has dipeptidyl peptidase activity, exhibiting the ability to hydrolyze the prolyl bond two residues from the N-terminus of synthetic dipeptide substrates provided that the penultimate residue is proline, with a preference for Ala-Pro, Ile-Pro, Gly-Pro, Arg-Pro and Pro-Pro. Natural neuropeptide hormones for dipeptidyl peptidase are the neuropeptide Y (NPY), peptide YY (PYY), substance P (TAC1) and brain natriuretic peptide 32 (NPPB). The plasma membrane form, in association with either DPP4, PLAUR or integrins, is involved in the pericellular proteolysis of the extracellular matrix (ECM), and hence promotes cell adhesion, migration and invasion through the ECM. Plays a role in tissue remodeling during development and wound healing. Participates in the cell invasiveness towards the ECM in malignant melanoma cancers. Enhances tumor growth progression by increasing angiogenesis, collagen fiber degradation and apoptosis and by reducing antitumor response of the immune system. Promotes glioma cell invasion through the brain parenchyma by degrading the proteoglycan brevican. Acts as a tumor suppressor in melanocytic cells through regulation of cell proliferation and survival in a serine protease activity-independent manner. In Mus musculus (Mouse), this protein is Prolyl endopeptidase FAP.